Consider the following 219-residue polypeptide: MPDSDNDSGGPSNYAGGELSSPREQDRFLPIANVSRIMKKALPANAKISKDAKETVQECVSEFISFITGEASDKCQREKRKTINGDDLLWAMTTLGFEDYVDPLKHYLHKFREIEGERAAASTTGAGTSAASTTPPQQQHTANAAGGYAGYAAPGAGPGGMMMMMGQPMYGSPPPPPQQQQQQHHHMAMGGRGGFGHHPGGGGGGSSSSSGHGRQNRGA.

Residues 1 to 26 form a disordered region; that stretch reads MPDSDNDSGGPSNYAGGELSSPREQD. The DNA-binding element occupies 29 to 35; the sequence is LPIANVS. Positions 56-67 are subunit association domain (SAD); it reads VQECVSEFISFI. A compositionally biased stretch (low complexity) spans 119–134; that stretch reads AAASTTGAGTSAASTT. Disordered stretches follow at residues 119 to 142 and 166 to 219; these read AAAS…QHTA and GQPM…NRGA. A compositionally biased stretch (gly residues) spans 190-206; it reads GGRGGFGHHPGGGGGGS.

It belongs to the NFYB/HAP3 subunit family. In terms of assembly, heterotrimeric transcription factor composed of three components, NF-YA, NF-YB and NF-YC. NF-YB and NF-YC must interact and dimerize for NF-YA association and DNA binding. Interacts with NFYC2, NFYC4 and NFYC6.

It is found in the cytoplasm. Functionally, component of the NF-Y/HAP transcription factor complex. The chain is Nuclear transcription factor Y subunit B-8 from Oryza sativa subsp. japonica (Rice).